The sequence spans 511 residues: Coiled-coil domain-containing protein 125 (511 aa).

The span at 1–12 (MSKVARSSSESD) shows a compositional bias: polar residues. The tract at residues 1-110 (MSKVARSSSE…TVDSNSELSN (110 aa)) is disordered. The span at 43 to 54 (EFSHRSRKRSDG) shows a compositional bias: basic and acidic residues. Residues 83–108 (QDTFPQVSRISNYRRQSSTVDSNSEL) show a composition bias toward polar residues. 2 coiled-coil regions span residues 105–243 (NSEL…LEAL) and 293–325 (RMAA…MADA). Phosphoserine is present on S504.

It localises to the cytoplasm. Functionally, may be involved in the regulation of cell migration. The sequence is that of Coiled-coil domain-containing protein 125 (CCDC125) from Homo sapiens (Human).